The chain runs to 98 residues: Small ribosomal subunit protein uS17 (98 aa).

This sequence belongs to the universal ribosomal protein uS17 family. As to quaternary structure, part of the 30S ribosomal subunit.

One of the primary rRNA binding proteins, it binds specifically to the 5'-end of 16S ribosomal RNA. The sequence is that of Small ribosomal subunit protein uS17 from Carboxydothermus hydrogenoformans (strain ATCC BAA-161 / DSM 6008 / Z-2901).